The sequence spans 270 residues: Photosystem I chlorophyll a/b-binding protein 6, chloroplastic (270 aa).

The N-terminal 33 residues, 1–33 (MAFAIASALTSTLTLSTSRVQNPTQRRPHVAST), are a transit peptide targeting the chloroplast. Residues 16 to 36 (STSRVQNPTQRRPHVASTSST) are disordered. Positions 19–36 (RVQNPTQRRPHVASTSST) are enriched in polar residues. Trp-68 contacts chlorophyll b. Positions 88 and 107 each coordinate chlorophyll a. A chlorophyll b-binding site is contributed by Arg-112. A helical membrane pass occupies residues 146-164 (YFADSTTLFVAQMVLMGWA). Positions 165 and 168 each coordinate chlorophyll b. Chlorophyll a contacts are provided by Lys-221, Glu-222, Asn-225, Arg-227, Gln-239, and His-254. The helical transmembrane segment at 228 to 244 (LAMLAFLGFCFQATYTS) threads the bilayer.

This sequence belongs to the light-harvesting chlorophyll a/b-binding (LHC) protein family. In terms of assembly, the LHC complex consists of chlorophyll a-b binding proteins. Homodimer. Binds pigments. Element of the NAD(P)H dehydrogenase-photosystem I supercomplex (NDH-PSI). Binds at least 14 chlorophylls (8 Chl-a and 6 Chl-b) and carotenoids such as lutein and neoxanthin. is required as a cofactor. Post-translationally, photoregulated by reversible phosphorylation of its threonine residues.

The protein localises to the plastid. Its subcellular location is the chloroplast thylakoid membrane. In terms of biological role, the light-harvesting complex (LHC) functions as a light receptor, it captures and delivers excitation energy to photosystems with which it is closely associated. Seems involved in the function of the photosystem I in low light conditions, when other LHCA proteins are less abundant. Required, together with LHCA5, for the formation of a full-size NAD(P)H dehydrogenase-photosystem I supercomplex (NDH-PSI) that triggers cyclic and chlororespiratory electron transport in chloroplast thylakoids, especially under stress conditions (e.g. increased light intensity). The polypeptide is Photosystem I chlorophyll a/b-binding protein 6, chloroplastic (Arabidopsis thaliana (Mouse-ear cress)).